We begin with the raw amino-acid sequence, 144 residues long: Protein cornichon (144 aa).

The Lumenal segment spans residues 1–10; that stretch reads MAFNFTAFTY. An interaction with grk region spans residues 1–57; it reads MAFNFTAFTYIVALIGDAFLIFFAIFHVIAFDELKTDYKNPIDQCNSLNPLVLPEYL. The chain crosses the membrane as a helical span at residues 11–31; sequence IVALIGDAFLIFFAIFHVIAF. Over 32–56 the chain is Cytoplasmic; sequence DELKTDYKNPIDQCNSLNPLVLPEY. The helical transmembrane segment at 57–77 threads the bilayer; it reads LLHLFLNLLFLFCGEWYSLCL. At 78-122 the chain is on the lumenal side; that stretch reads NIPLIAYHIWRYKNRPLMSGPGLYDPTTVLKTDTLSRNLREGWIK. The helical transmembrane segment at 123 to 143 threads the bilayer; sequence LAVYLISFFYYIYGMVYSLIS. Position 144 (T144) is a topological domain, cytoplasmic.

It belongs to the cornichon family. In terms of assembly, interacts with grk.

It is found in the endoplasmic reticulum membrane. Acts as a cargo receptor necessary for the transportation of gurken (grk) to a transitional endoplasmic reticulum (tER) site and promotes its incorporation into coat protein complex II (COPII) vesicles. Associated with gurken, produces a signal received by torpedo resulting in a signaling pathway that first establishes posterior follicle cell fates and normal localization of the anterior and posterior determinants, later they act in a signaling event inducing dorsal follicle cell fates and regulating the dorsal-ventral pattern of egg and embryo. The chain is Protein cornichon (cni) from Drosophila virilis (Fruit fly).